A 1218-amino-acid polypeptide reads, in one-letter code: Chitin synthase 4 (1218 aa).

2 disordered regions span residues 1-93 (MAEP…PERN) and 132-190 (TVSS…RRQK). Residues 14-34 (TRDKSHSPYRESPSRRLRDVE) are compositionally biased toward basic and acidic residues. Residue Asn-50 is glycosylated (N-linked (GlcNAc...) asparagine). Composition is skewed to polar residues over residues 71–80 (SNPNPMSQSD) and 133–142 (VSSGSTQQDT). Positions 175–190 (RKDTRNLTEEEKRRQK) are enriched in basic and acidic residues. N-linked (GlcNAc...) asparagine glycosylation occurs at Asn-180. Helical transmembrane passes span 200-220 (IWNI…LQCF) and 235-255 (VGLI…TFGF). N-linked (GlcNAc...) asparagine glycosylation is found at Asn-365, Asn-404, and Asn-426. Residues 487–507 (VVLYVSLVFILAIVAAKFFLA) traverse the membrane as a helical segment. 2 disordered regions span residues 548-570 (PKIT…RGSM) and 582-606 (YAVD…AKLL). The segment covering 553 to 562 (PASTVTGSDG) has biased composition (polar residues). Asn-617, Asn-903, and Asn-1030 each carry an N-linked (GlcNAc...) asparagine glycan. 3 helical membrane passes run 1062–1082 (IGTL…IISI), 1087–1107 (VPVI…ILIV), and 1115–1135 (YILW…VLPA). Positions 1188–1218 (QANGSVWNQQPPTRPPSGYGSMHGFEPYRDY) are disordered. Residues 1189-1198 (ANGSVWNQQP) show a composition bias toward polar residues. Residue Asn-1190 is glycosylated (N-linked (GlcNAc...) asparagine).

It belongs to the chitin synthase family. Class IV subfamily. Maximal activity requires trypsin activation, suggesting a zymogenic nature.

The protein localises to the cell membrane. It carries out the reaction [(1-&gt;4)-N-acetyl-beta-D-glucosaminyl](n) + UDP-N-acetyl-alpha-D-glucosamine = [(1-&gt;4)-N-acetyl-beta-D-glucosaminyl](n+1) + UDP + H(+). With respect to regulation, activity is stimulated by Mg(2+), and is more inhibited by polyoxin D than by nikkomycin. Functionally, polymerizes chitin, a structural polymer of the cell wall and septum, by transferring the sugar moiety of UDP-GlcNAc to the non-reducing end of the growing chitin polymer. CHS4 synthesizes a large amount of chitin and appears to play a role in the process of cell separation. CHS4 is particularly well suited for functioning at the higher temperatures associated with its poorly characterized saprophic environment and with human infection. In Exophiala dermatitidis (strain ATCC 34100 / CBS 525.76 / NIH/UT8656) (Black yeast), this protein is Chitin synthase 4.